We begin with the raw amino-acid sequence, 144 residues long: Arsenate reductase ArsI1 (144 aa).

The Nucleophile; cysteine thioarsenate intermediate role is filled by C14.

This sequence belongs to the ArsC family.

The enzyme catalyses [glutaredoxin]-dithiol + arsenate + glutathione + H(+) = glutathionyl-S-S-[glutaredoxin] + arsenite + H2O. Catalyzes the reduction of arsenate [As(V)] to arsenite [As(III)]. Does not constitute the major arsenate reductase in cells: essential only in the absence of ArsC (AC P74313). The sequence is that of Arsenate reductase ArsI1 from Synechocystis sp. (strain ATCC 27184 / PCC 6803 / Kazusa).